The sequence spans 233 residues: Lipoprotein-releasing system ATP-binding protein LolD (233 aa).

The ABC transporter domain maps to 7 to 233; it reads IHCEKLSKTY…QLQSESERNH (227 aa). Residue 43–50 participates in ATP binding; that stretch reads GASGAGKS.

This sequence belongs to the ABC transporter superfamily. Lipoprotein translocase (TC 3.A.1.125) family. In terms of assembly, the complex is composed of two ATP-binding proteins (LolD) and two transmembrane proteins (LolC and LolE).

The protein localises to the cell inner membrane. Its function is as follows. Part of the ABC transporter complex LolCDE involved in the translocation of mature outer membrane-directed lipoproteins, from the inner membrane to the periplasmic chaperone, LolA. Responsible for the formation of the LolA-lipoprotein complex in an ATP-dependent manner. The chain is Lipoprotein-releasing system ATP-binding protein LolD from Coxiella burnetii (strain RSA 493 / Nine Mile phase I).